Reading from the N-terminus, the 467-residue chain is L-seryl-tRNA(Sec) selenium transferase (467 aa).

Lys298 is modified (N6-(pyridoxal phosphate)lysine).

It belongs to the SelA family. Requires pyridoxal 5'-phosphate as cofactor.

The protein resides in the cytoplasm. The enzyme catalyses L-seryl-tRNA(Sec) + selenophosphate + H(+) = L-selenocysteinyl-tRNA(Sec) + phosphate. It participates in aminoacyl-tRNA biosynthesis; selenocysteinyl-tRNA(Sec) biosynthesis; selenocysteinyl-tRNA(Sec) from L-seryl-tRNA(Sec) (bacterial route): step 1/1. Its function is as follows. Converts seryl-tRNA(Sec) to selenocysteinyl-tRNA(Sec) required for selenoprotein biosynthesis. In Alkaliphilus metalliredigens (strain QYMF), this protein is L-seryl-tRNA(Sec) selenium transferase.